Reading from the N-terminus, the 226-residue chain is Small ribosomal subunit protein uS3 (226 aa).

The region spanning 39–109 is the KH type-2 domain; sequence IYKFFDKFTR…KLDVNLKVLT (71 aa).

Belongs to the universal ribosomal protein uS3 family. Part of the 30S ribosomal subunit. Forms a tight complex with proteins S10 and S14.

In terms of biological role, binds the lower part of the 30S subunit head. Binds mRNA in the 70S ribosome, positioning it for translation. This chain is Small ribosomal subunit protein uS3, found in Mycoplasmopsis synoviae (strain 53) (Mycoplasma synoviae).